The following is a 65-amino-acid chain: Conotoxin tx3c (65 aa).

Residues 1–19 form the signal peptide; that stretch reads MFKLGVLLTICLLLFSLNA. The propeptide occupies 20–50; it reads VPLDGDQPADQPAERLLDDISFENNPFYDPA. 3 disulfides stabilise this stretch: Cys53-Cys64, Cys54-Cys60, and Cys57-Cys63. 4-hydroxyproline; partial is present on Pro62. Cys64 carries the post-translational modification Cysteine amide.

The hydroxylation at Pro-62 is observed in PubMed:15924437, PubMed:19380747 and PubMed:22709442, and the non-hydroxylation is described in PubMed:22709442. Expressed by the venom duct.

It is found in the secreted. In terms of biological role, causes scratching in mice. The sequence is that of Conotoxin tx3c from Conus textile (Cloth-of-gold cone).